The sequence spans 924 residues: Isoleucine--tRNA ligase (924 aa).

The 'HIGH' region signature appears at 57 to 67 (PYANGDIHMGH). Glu552 provides a ligand contact to L-isoleucyl-5'-AMP. The 'KMSKS' region signature appears at 593 to 597 (KMSKS). Lys596 is an ATP binding site. Residues Cys891, Cys894, Cys911, and Cys914 each contribute to the Zn(2+) site.

This sequence belongs to the class-I aminoacyl-tRNA synthetase family. IleS type 1 subfamily. As to quaternary structure, monomer. The cofactor is Zn(2+).

The protein localises to the cytoplasm. It catalyses the reaction tRNA(Ile) + L-isoleucine + ATP = L-isoleucyl-tRNA(Ile) + AMP + diphosphate. Functionally, catalyzes the attachment of isoleucine to tRNA(Ile). As IleRS can inadvertently accommodate and process structurally similar amino acids such as valine, to avoid such errors it has two additional distinct tRNA(Ile)-dependent editing activities. One activity is designated as 'pretransfer' editing and involves the hydrolysis of activated Val-AMP. The other activity is designated 'posttransfer' editing and involves deacylation of mischarged Val-tRNA(Ile). In Geobacillus thermodenitrificans (strain NG80-2), this protein is Isoleucine--tRNA ligase.